We begin with the raw amino-acid sequence, 196 residues long: Small ribosomal subunit protein uS4c (196 aa).

Residues 15 to 41 are disordered; it reads LGALPGLTSKRPRSGSDLKNPLRSGKR. Residues 89–150 form the S4 RNA-binding domain; that stretch reads MRLDNILFRL…KQRSKALIQN (62 aa).

It belongs to the universal ribosomal protein uS4 family. In terms of assembly, part of the 30S ribosomal subunit. Contacts protein S5. The interaction surface between S4 and S5 is involved in control of translational fidelity.

The protein resides in the plastid. Its subcellular location is the chloroplast. Its function is as follows. One of the primary rRNA binding proteins, it binds directly to 16S rRNA where it nucleates assembly of the body of the 30S subunit. With S5 and S12 plays an important role in translational accuracy. This chain is Small ribosomal subunit protein uS4c (rps4), found in Narcissus odorus (Campernelle jonquil).